Consider the following 189-residue polypeptide: Recombination protein RecR (189 aa).

The C4-type zinc finger occupies 48 to 63 (CQTCFHLSAEPLCDIC). A Toprim domain is found at 71–165 (QLLCVVADSR…QVSRIAYGLP (95 aa)).

This sequence belongs to the RecR family.

In terms of biological role, may play a role in DNA repair. It seems to be involved in an RecBC-independent recombinational process of DNA repair. It may act with RecF and RecO. The polypeptide is Recombination protein RecR (Prochlorococcus marinus (strain MIT 9313)).